Reading from the N-terminus, the 718-residue chain is Sodium/myo-inositol cotransporter (718 aa).

At 1–9 (MRAVLETAD) the chain is on the extracellular side. Residues 10 to 29 (IAIVALYFILVMCIGFFAMW) form a helical membrane-spanning segment. At 30–38 (KSNRSTVSG) the chain is on the cytoplasmic side. Residues 39–57 (YFLAGRSMTWVAIGASLFV) traverse the membrane as a helical segment. Topologically, residues 58–86 (SNIGSEHFIGLAGSGAASGFAVGAWEFNA) are extracellular. The helical transmembrane segment at 87–110 (LLLLQLLGWVFIPIYIRSGVYTMP) threads the bilayer. The Cytoplasmic portion of the chain corresponds to 111–123 (EYLSKRFGGHRIQ). A helical membrane pass occupies residues 124–144 (VYFAALSLILYIFTKLSVDLY). Over 145–157 (SGALFIQESLGWN) the chain is Extracellular. Residues 158-183 (LYVSVILLIGMTALLTVTGGLVAVIY) form a helical membrane-spanning segment. The Cytoplasmic portion of the chain corresponds to 184–186 (TDT). Residues 187–205 (LQALLMIVGALTLMIISMM) traverse the membrane as a helical segment. Topologically, residues 206–303 (EIGGFEEVKR…HAKGSTLMAG (98 aa)) are extracellular. The N-linked (GlcNAc...) asparagine glycan is linked to asparagine 232. A helical transmembrane segment spans residues 304–324 (FLKLLPMFIIVVPGMISRILF). Residues 325 to 353 (ADDIACINPEHCMQVCGSRAGCSNIAYPR) lie on the Cytoplasmic side of the membrane. A helical membrane pass occupies residues 354–376 (LVMKLVPVGLRGLMMAVMIAALM). Residues 377 to 406 (SDLDSIFNSASTIFTLDVYKLIRRSASSRE) are Extracellular-facing. The chain crosses the membrane as a helical span at residues 407–430 (LMIVGRIFVAFMVVISIAWVPIIV). Residues 431–443 (EMQGGQMYLYIQE) are Cytoplasmic-facing. Residues 444 to 462 (VADYLTPPVAALFLLAIFW) traverse the membrane as a helical segment. Topologically, residues 463-510 (KRCNEQGAFYGGMAGFVLGAVRLTLAFAYRAPECDQPDNRPGFIKDIH) are extracellular. A helical membrane pass occupies residues 511–532 (YMYVATALFWVTGLITVIVSLL). The Cytoplasmic portion of the chain corresponds to 533–695 (TPPPTKEQIR…QMLEEPPQVK (163 aa)). 2 positions are modified to phosphoserine: serine 594 and serine 632. The helical transmembrane segment at 696–716 (LILNIGLFAVCSLGIFMFVYF) threads the bilayer. Over 717 to 718 (SL) the chain is Extracellular.

The protein belongs to the sodium:solute symporter (SSF) (TC 2.A.21) family. Interacts with KCNQ2 (via the pore module). Interacts with KCNQ1; this interaction is direct. Forms coregulatory complexes with ion channels KCNQ2-KCNQ3 and KCNQ1-KCNE2. In terms of tissue distribution, kidney cortex and medulla.

It localises to the apical cell membrane. It is found in the basolateral cell membrane. It carries out the reaction myo-inositol(out) + 2 Na(+)(out) = myo-inositol(in) + 2 Na(+)(in). The enzyme catalyses scyllo-inositol(out) + 2 Na(+)(out) = scyllo-inositol(in) + 2 Na(+)(in). Its activity is regulated as follows. Inhibited by phlorizin and phloretin. Electrogenic Na(+)-coupled sugar symporter that actively transports myo-inositol and its stereoisomer scyllo-inositol across the plasma membrane, with a Na(+) to sugar coupling ratio of 2:1. Maintains myo-inositol concentration gradient that defines cell volume and fluid balance during osmotic stress, in particular in the fetoplacental unit and central nervous system. Forms coregulatory complexes with voltage-gated K(+) ion channels, allosterically altering ion selectivity, voltage dependence and gating kinetics of the channel. In turn, K(+) efflux through the channel forms a local electrical gradient that modulates electrogenic Na(+)-coupled myo-inositol influx through the transporter. Associates with KCNQ1-KCNE2 channel in the apical membrane of choroid plexus epithelium and regulates the myo-inositol gradient between blood and cerebrospinal fluid with an impact on neuron excitability. Associates with KCNQ2-KCNQ3 channel altering ion selectivity, increasing Na(+) and Cs(+) permeation relative to K(+) permeation. Provides myo-inositol precursor for biosynthesis of phosphoinositides such as PI(4,5)P2, thus indirectly affecting the activity of phosphoinositide-dependent ion channels and Ca(2+) signaling upon osmotic stress. Has very low affinity for sugars such as L-fucose and L-xylose, with an affinity about three orders of magnitude lower than myo-inositol. The protein is Sodium/myo-inositol cotransporter (SLC5A3) of Canis lupus familiaris (Dog).